The primary structure comprises 543 residues: Lipoyl synthase, apicoplast (543 aa).

A signal peptide spans 1 to 63; the sequence is MAYFFDFPTD…LFSLLSASQS (63 aa). Residues Cys252, Cys257, Cys263, Cys278, Cys282, Cys285, and Ser493 each coordinate [4Fe-4S] cluster. The Radical SAM core domain occupies 264-482; that stretch reads WNGGTATLIL…QDIAEEMGFK (219 aa).

This sequence belongs to the radical SAM superfamily. Lipoyl synthase family. It depends on [4Fe-4S] cluster as a cofactor.

The protein resides in the plastid. Its subcellular location is the apicoplast. It catalyses the reaction [[Fe-S] cluster scaffold protein carrying a second [4Fe-4S](2+) cluster] + N(6)-octanoyl-L-lysyl-[protein] + 2 oxidized [2Fe-2S]-[ferredoxin] + 2 S-adenosyl-L-methionine + 4 H(+) = [[Fe-S] cluster scaffold protein] + N(6)-[(R)-dihydrolipoyl]-L-lysyl-[protein] + 4 Fe(3+) + 2 hydrogen sulfide + 2 5'-deoxyadenosine + 2 L-methionine + 2 reduced [2Fe-2S]-[ferredoxin]. Its pathway is protein modification; protein lipoylation via endogenous pathway; protein N(6)-(lipoyl)lysine from octanoyl-[acyl-carrier-protein]: step 2/2. Catalyzes the radical-mediated insertion of two sulfur atoms into the C-6 and C-8 positions of the octanoyl moiety bound to the lipoyl domains of lipoate-dependent enzymes, thereby converting the octanoylated domains into lipoylated derivatives. In Toxoplasma gondii, this protein is Lipoyl synthase, apicoplast.